The following is a 158-amino-acid chain: Salt stress-responsive protein YocM (158 aa).

The sHSP domain maps to 51-158 (GKGDASFPSM…GQAKTIVIDD (108 aa)).

This sequence belongs to the small heat shock protein (HSP20) family. Forms homodimers, homotetramers and higher oligomers.

It localises to the cytoplasm. Part of the cellular protein quality control system with a specific role in salt stress response. May facilitate protein homeostasis, together with chemical chaperones that accumulate during the salt stress response. Increased levels of YocM protects against both heat and salt stress. In vitro, displays an unusual aggregase chaperone activity. This is Salt stress-responsive protein YocM (yocM) from Bacillus subtilis (strain 168).